The sequence spans 97 residues: Large ribosomal subunit protein uL23 (97 aa).

The protein belongs to the universal ribosomal protein uL23 family. As to quaternary structure, part of the 50S ribosomal subunit. Contacts protein L29, and trigger factor when it is bound to the ribosome.

Functionally, one of the early assembly proteins it binds 23S rRNA. One of the proteins that surrounds the polypeptide exit tunnel on the outside of the ribosome. Forms the main docking site for trigger factor binding to the ribosome. The chain is Large ribosomal subunit protein uL23 from Sinorhizobium fredii (strain NBRC 101917 / NGR234).